A 716-amino-acid chain; its full sequence is Polyribonucleotide nucleotidyltransferase (716 aa).

Asp-485 and Asp-491 together coordinate Mg(2+). Residues 552-611 (PRFTTIKIDQDKIKDVIGKGGAVIRELTESTNTNIEIGDDGTIKVAASDQADADAAIEKI) form the KH domain. The S1 motif domain maps to 621–689 (GKIYQGKVAR…RQGRVRLSMK (69 aa)). Residues 689–698 (KEAAEKKEEP) show a composition bias toward basic and acidic residues. A disordered region spans residues 689–716 (KEAAEKKEEPAPEAPAEPAAEEENKSEE). Acidic residues predominate over residues 707-716 (AAEEENKSEE).

This sequence belongs to the polyribonucleotide nucleotidyltransferase family. In terms of assembly, component of the RNA degradosome, which is a multiprotein complex involved in RNA processing and mRNA degradation. Mg(2+) serves as cofactor.

Its subcellular location is the cytoplasm. The catalysed reaction is RNA(n+1) + phosphate = RNA(n) + a ribonucleoside 5'-diphosphate. Its function is as follows. Involved in mRNA degradation. Catalyzes the phosphorolysis of single-stranded polyribonucleotides processively in the 3'- to 5'-direction. In Idiomarina loihiensis (strain ATCC BAA-735 / DSM 15497 / L2-TR), this protein is Polyribonucleotide nucleotidyltransferase.